The chain runs to 311 residues: Aspartate carbamoyltransferase catalytic subunit (311 aa).

Positions 55 and 56 each coordinate carbamoyl phosphate. Lys-85 contacts L-aspartate. Carbamoyl phosphate-binding residues include Arg-106, His-135, and Gln-138. 2 residues coordinate L-aspartate: Arg-168 and Arg-230. Carbamoyl phosphate-binding residues include Leu-268 and Pro-269.

The protein belongs to the aspartate/ornithine carbamoyltransferase superfamily. ATCase family. In terms of assembly, heterododecamer (2C3:3R2) of six catalytic PyrB chains organized as two trimers (C3), and six regulatory PyrI chains organized as three dimers (R2).

The enzyme catalyses carbamoyl phosphate + L-aspartate = N-carbamoyl-L-aspartate + phosphate + H(+). It functions in the pathway pyrimidine metabolism; UMP biosynthesis via de novo pathway; (S)-dihydroorotate from bicarbonate: step 2/3. Functionally, catalyzes the condensation of carbamoyl phosphate and aspartate to form carbamoyl aspartate and inorganic phosphate, the committed step in the de novo pyrimidine nucleotide biosynthesis pathway. This is Aspartate carbamoyltransferase catalytic subunit from Salmonella arizonae (strain ATCC BAA-731 / CDC346-86 / RSK2980).